A 114-amino-acid polypeptide reads, in one-letter code: Reprimo-like protein (114 aa).

Residues 61–81 (VVQIAVLCVLSLTVMFGIFFL) form a helical membrane-spanning segment.

This sequence belongs to the reprimo family.

It localises to the membrane. In Danio rerio (Zebrafish), this protein is Reprimo-like protein (rprml).